The sequence spans 595 residues: Aspartate--tRNA ligase (595 aa).

Residue Glu-173 participates in L-aspartate binding. The aspartate stretch occupies residues 197 to 200 (QLFK). Residue Arg-219 coordinates L-aspartate. ATP is bound by residues 219 to 221 (RDE) and Gln-228. His-449 is a binding site for L-aspartate. ATP is bound at residue Glu-483. Arg-490 is a binding site for L-aspartate. 535 to 538 (GLDR) provides a ligand contact to ATP.

This sequence belongs to the class-II aminoacyl-tRNA synthetase family. Type 1 subfamily. Homodimer.

The protein localises to the cytoplasm. It catalyses the reaction tRNA(Asp) + L-aspartate + ATP = L-aspartyl-tRNA(Asp) + AMP + diphosphate. Functionally, catalyzes the attachment of L-aspartate to tRNA(Asp) in a two-step reaction: L-aspartate is first activated by ATP to form Asp-AMP and then transferred to the acceptor end of tRNA(Asp). The chain is Aspartate--tRNA ligase from Shewanella sediminis (strain HAW-EB3).